Consider the following 186-residue polypeptide: Lipid A palmitoyltransferase PagP (186 aa).

An N-terminal signal peptide occupies residues 1-25 (MNVSKYVAIFSFVFIQLISVGKVFA). Catalysis depends on residues His58, Asp101, and Ser102.

This sequence belongs to the lipid A palmitoyltransferase family. Homodimer.

The protein resides in the cell outer membrane. It carries out the reaction lipid A (E. coli) + a 1-hexadecanoyl-2-acyl-sn-glycero-3-phosphocholine = hepta-acyl lipid A (E. coli) + a 2-acyl-sn-glycero-3-phosphocholine. It catalyses the reaction lipid IIA + a 1-hexadecanoyl-2-acyl-sn-glycero-3-phosphocholine = lipid IIB + a 2-acyl-sn-glycero-3-phosphocholine. The enzyme catalyses lipid IVA (E. coli) + a 1-hexadecanoyl-2-acyl-sn-glycero-3-phosphocholine = lipid IVB (E. coli) + a 2-acyl-sn-glycero-3-phosphocholine. Inhibited by lauryldimethylamine oxide (LDAO) and dodecylphosphocholine (DPC). Functionally, transfers a palmitate residue from the sn-1 position of a phospholipid to the N-linked hydroxymyristate on the proximal unit of lipid A or its precursors. Phosphatidylglycerol (PtdGro), phosphatidylethanolamine (PtdEtn), phosphatidylserine (PtdSer) and phosphatidic acid (Ptd-OH) are all effective acyl donors. The protein is Lipid A palmitoyltransferase PagP of Escherichia coli (strain K12).